Here is a 325-residue protein sequence, read N- to C-terminus: Probable NADH kinase (325 aa).

Belongs to the NAD kinase family. In terms of assembly, homodimer.

It is found in the cytoplasm. It carries out the reaction NADH + ATP = ADP + NADPH + H(+). Functionally, key source of the cellular reductant NADPH which is an important antioxidant factor. The sequence is that of Probable NADH kinase from Oryza sativa subsp. japonica (Rice).